The following is a 261-amino-acid chain: Histone H1-I (261 aa).

Residues 1 to 22 (MSETEAAPVVAPAAEAAPAAEA) show a composition bias toward low complexity. Disordered stretches follow at residues 1–63 (MSET…PPYI) and 125–261 (FKLS…KGKK). The span at 41-50 (APKEPKAPKE) shows a compositional bias: basic and acidic residues. Residues 58-129 (THPPYIEMVK…KVKGSFKLSE (72 aa)) enclose the H15 domain. The segment covering 133-142 (AKAKKSTPKK) has biased composition (basic residues). Repeat copies occupy residues 136–140 (KKSTP) and 188–192 (KKATP). Positions 136 to 250 (KKSTPKKAKA…KKAPAKKSTP (115 aa)) are 7 X 5 AA repeats of K-K-[AS]-T-P. A DNA-binding region spans residues 139-142 (TPKK). Basic and acidic residues predominate over residues 143–198 (AKADGEAKPKKSEAKPKKAEAVKKTKAPKEKVERPKKEKKEKVEKKKATPKAEKPK). Residues 199-203 (KAATP) form a 3; approximate repeat. 4 tandem repeats follow at residues 209–213 (KKATP), 230–234 (KKATP), 236–240 (KKAAP), and 246–250 (KKSTP). Residues 227–250 (AKPKKATPSKKAAPKKAPAKKSTP) show a composition bias toward basic residues. Residues 251 to 261 (KAKEAKSKGKK) are compositionally biased toward basic and acidic residues.

The protein belongs to the histone H1/H5 family.

It localises to the nucleus. It is found in the chromosome. Functionally, histones H1 are necessary for the condensation of nucleosome chains into higher-order structures. This is Histone H1-I (H1-I) from Volvox carteri (Green alga).